Consider the following 83-residue polypeptide: Gas vesicle protein G (83 aa).

It belongs to the gas vesicle GvpG family. In terms of assembly, gvpF to GvpM interact with each other in vitro, and may form multi-subunit complex(es).

It localises to the gas vesicle. Functionally, proteins GvpF to GvpM might be involved in nucleating gas vesicle formation. A minor component of the gas vesicle. Gas vesicles are hollow, gas filled proteinaceous nanostructures found in some microorganisms. They allow positioning of halobacteria at the optimal depth for growth in the poorly aerated, shallow brine pools of their habitat. In terms of biological role, expression of a 9.5 kb mc-vac DNA fragment containing 2 divergently transcribed regions (gvpD-gvpE-gvpF-gvpG-gvpH-gvpI-gvpJ-gvpK-gvpL-gvpM and gvpA-gvpC-gvpN-gvpO) allows H.volcanii to produce gas vesicles. This chain is Gas vesicle protein G, found in Haloferax mediterranei (strain ATCC 33500 / DSM 1411 / JCM 8866 / NBRC 14739 / NCIMB 2177 / R-4) (Halobacterium mediterranei).